The following is a 371-amino-acid chain: Spermidine/putrescine import ATP-binding protein PotA (371 aa).

The 231-residue stretch at 10-240 (VELRNVTKSY…PKNLFVARFI (231 aa)) folds into the ABC transporter domain. ATP is bound at residue 42–49 (GPSGCGKT).

This sequence belongs to the ABC transporter superfamily. Spermidine/putrescine importer (TC 3.A.1.11.1) family. As to quaternary structure, the complex is composed of two ATP-binding proteins (PotA), two transmembrane proteins (PotB and PotC) and a solute-binding protein (PotD).

The protein resides in the cell inner membrane. It carries out the reaction ATP + H2O + polyamine-[polyamine-binding protein]Side 1 = ADP + phosphate + polyamineSide 2 + [polyamine-binding protein]Side 1.. Functionally, part of the ABC transporter complex PotABCD involved in spermidine/putrescine import. Responsible for energy coupling to the transport system. The chain is Spermidine/putrescine import ATP-binding protein PotA from Haemophilus ducreyi (strain 35000HP / ATCC 700724).